The following is a 491-amino-acid chain: La-related protein 6 (491 aa).

A disordered region spans residues 1–87 (MAQSGGEARP…REDLEQEWKP (87 aa)). N-acetylalanine is present on A2. Over residues 24–37 (EAEDVDELEDEEEG) the composition is skewed to acidic residues. Residues S56 and S58 each carry the phosphoserine modification. The HTH La-type RNA-binding domain occupies 86 to 177 (KPPDEELIKK…RRTTPVPLFP (92 aa)). Positions 184 to 296 (KMLLVYDLYL…KAVLIGMKPP (113 aa)) constitute an RRM domain. The Nuclear export signal motif lies at 186–193 (LLVYDLYL). 2 disordered regions span residues 293-403 (MKPP…EEGR) and 423-491 (SSVT…RACV). The Nuclear localization signal signature appears at 296-302 (PKKKPAK). The segment covering 332-346 (DESSANSSSDPESNP) has biased composition (low complexity). Polar residues-rich tracts occupy residues 359 to 386 (NKLSPSGHQNLFLSPNASPCTSPWSSPL) and 444 to 453 (QEKSPGTSPL). The SUZ-C domain occupies 427 to 485 (PSGSPWVRRRRQAEMGTQEKSPGTSPLLSRKMQTADGLPVGVLRLPRGPDNTRGFHGHE). Residues 482–491 (HGHERSRACV) are compositionally biased toward basic and acidic residues.

Interacts (via the HTH domain) with VIM/vimentin. Interacts (via C-terminus) with non-muscle myosin MYH10. Interacts (via C-terminus) with DHX9. As to expression, expressed in numerous tissues.

It localises to the cytoplasm. The protein localises to the nucleus. Regulates the coordinated translation of type I collagen alpha-1 and alpha-2 mRNAs, CO1A1 and CO1A2. Stabilizes mRNAs through high-affinity binding of a stem-loop structure in their 5' UTR. This regulation requires VIM and MYH10 filaments, and the helicase DHX9. In Homo sapiens (Human), this protein is La-related protein 6 (LARP6).